The chain runs to 106 residues: Large ribosomal subunit protein uL24 (106 aa).

Belongs to the universal ribosomal protein uL24 family. In terms of assembly, part of the 50S ribosomal subunit.

In terms of biological role, one of two assembly initiator proteins, it binds directly to the 5'-end of the 23S rRNA, where it nucleates assembly of the 50S subunit. Its function is as follows. One of the proteins that surrounds the polypeptide exit tunnel on the outside of the subunit. The chain is Large ribosomal subunit protein uL24 from Bordetella petrii (strain ATCC BAA-461 / DSM 12804 / CCUG 43448).